A 221-amino-acid polypeptide reads, in one-letter code: GTP-binding nuclear protein Ran-2 (221 aa).

One can recognise a Small GTPase Ran-type domain in the interval 10–174 (DYPSFKLVIV…LYLARKLAGD (165 aa)). 21-28 (DGGTGKTT) lines the GTP pocket. The switch-I stretch occupies residues 40 to 48 (KKYEPTIGV). GTP is bound by residues Gly71, 125–128 (NKVD), and 153–155 (SAK). Residues 71–87 (GQEKFGGLRDGYYIHGQ) form a switch-II region.

It belongs to the small GTPase superfamily. Ran family. As to quaternary structure, found in a nuclear export complex with RanGTP, exportin and pre-miRNA.

It is found in the nucleus. In terms of biological role, GTP-binding protein involved in nucleocytoplasmic transport. Required for the import of protein into the nucleus and also for RNA export. Involved in chromatin condensation and control of cell cycle. The sequence is that of GTP-binding nuclear protein Ran-2 (RAN2) from Oryza sativa subsp. indica (Rice).